Here is a 697-residue protein sequence, read N- to C-terminus: DNA ligase (697 aa).

Residues 36–40, 85–86, and Glu-123 contribute to the NAD(+) site; these read DAEYD and SL. Lys-125 acts as the N6-AMP-lysine intermediate in catalysis. NAD(+) is bound by residues Arg-146, Glu-182, Lys-320, and Lys-344. Positions 438, 441, 456, and 462 each coordinate Zn(2+). Residues 619–697 enclose the BRCT domain; it reads PQGNTLAGKT…EDGLKALLGV (79 aa).

Belongs to the NAD-dependent DNA ligase family. LigA subfamily. It depends on Mg(2+) as a cofactor. Mn(2+) is required as a cofactor.

It catalyses the reaction NAD(+) + (deoxyribonucleotide)n-3'-hydroxyl + 5'-phospho-(deoxyribonucleotide)m = (deoxyribonucleotide)n+m + AMP + beta-nicotinamide D-nucleotide.. Its function is as follows. DNA ligase that catalyzes the formation of phosphodiester linkages between 5'-phosphoryl and 3'-hydroxyl groups in double-stranded DNA using NAD as a coenzyme and as the energy source for the reaction. It is essential for DNA replication and repair of damaged DNA. The sequence is that of DNA ligase from Bordetella petrii (strain ATCC BAA-461 / DSM 12804 / CCUG 43448).